The chain runs to 69 residues: Cold shock-like protein CspC (69 aa).

Residues 6-66 enclose the CSD domain; the sequence is GQVKWFNESK…GQKGPAAVNV (61 aa).

It is found in the cytoplasm. In Buchnera aphidicola subsp. Acyrthosiphon pisum (strain APS) (Acyrthosiphon pisum symbiotic bacterium), this protein is Cold shock-like protein CspC (cspC).